A 517-amino-acid polypeptide reads, in one-letter code: Ribonuclease Y (517 aa).

The chain crosses the membrane as a helical span at residues 1 to 21; it reads MIESLIALIAAIVGLGIGYLV. A KH domain is found at 207–273; the sequence is LINVINIKND…TKVIELLVED (67 aa). The HD domain maps to 333–426; the sequence is ALAHSLEVAH…VCAADTLSAA (94 aa).

This sequence belongs to the RNase Y family.

It localises to the cell membrane. Its function is as follows. Endoribonuclease that initiates mRNA decay. The chain is Ribonuclease Y from Campylobacter jejuni subsp. jejuni serotype O:2 (strain ATCC 700819 / NCTC 11168).